Here is a 231-residue protein sequence, read N- to C-terminus: MRGFFVTGTDTEVGKTVISSGLAALLKDNNRHVGVYKPFLSGISRHHPDSDTSLLKDMSQTSLSHEDITPFAFKAPLAPYVAGKLEGKTVTMEEVLSHWGRIREKHECFIVEGAGGISVPLGEDYLVSHVIKALQLPMIIVARPRLGTINHTFLTVKYAESMGLPIAGIIINGISDSPDEDEKTNPEMIERLCGVPILGVTPKLANVTKETVLHMVKDHINLSLLMNQVGV.

12–17 (EVGKTV) contributes to the ATP binding site. Threonine 16 is a binding site for Mg(2+). Lysine 37 is a catalytic residue. Serine 41 contacts substrate. ATP is bound by residues aspartate 51, 112 to 115 (EGAG), and 202 to 204 (PKL). Mg(2+) contacts are provided by aspartate 51 and glutamate 112.

The protein belongs to the dethiobiotin synthetase family. In terms of assembly, homodimer. Mg(2+) is required as a cofactor.

Its subcellular location is the cytoplasm. It catalyses the reaction (7R,8S)-7,8-diammoniononanoate + CO2 + ATP = (4R,5S)-dethiobiotin + ADP + phosphate + 3 H(+). Its pathway is cofactor biosynthesis; biotin biosynthesis; biotin from 7,8-diaminononanoate: step 1/2. Its function is as follows. Catalyzes a mechanistically unusual reaction, the ATP-dependent insertion of CO2 between the N7 and N8 nitrogen atoms of 7,8-diaminopelargonic acid (DAPA, also called 7,8-diammoniononanoate) to form a ureido ring. The protein is ATP-dependent dethiobiotin synthetase BioD of Bacillus subtilis (strain 168).